A 223-amino-acid chain; its full sequence is 2-phospho-L-lactate guanylyltransferase (223 aa).

Belongs to the CofC family. Homodimer.

It catalyses the reaction (2S)-2-phospholactate + GTP + H(+) = (2S)-lactyl-2-diphospho-5'-guanosine + diphosphate. It functions in the pathway cofactor biosynthesis; coenzyme F420 biosynthesis. Functionally, guanylyltransferase that catalyzes the activation of (2S)-2-phospholactate (2-PL) as (2S)-lactyl-2-diphospho-5'-guanosine, via the condensation of 2-PL with GTP. It is involved in the biosynthesis of coenzyme F420, a hydride carrier cofactor. The sequence is that of 2-phospho-L-lactate guanylyltransferase from Methanothermobacter thermautotrophicus (strain ATCC 29096 / DSM 1053 / JCM 10044 / NBRC 100330 / Delta H) (Methanobacterium thermoautotrophicum).